Here is a 204-residue protein sequence, read N- to C-terminus: E2 ubiquitin-conjugating enzyme PEX4 (204 aa).

One can recognise a UBC core domain in the interval 2 to 196 (SAEKRLLQEY…IEYYVGRYSI (195 aa)). C133 (glycyl thioester intermediate) is an active-site residue.

It belongs to the ubiquitin-conjugating enzyme family.

It localises to the peroxisome membrane. It carries out the reaction S-ubiquitinyl-[E1 ubiquitin-activating enzyme]-L-cysteine + [E2 ubiquitin-conjugating enzyme]-L-cysteine = [E1 ubiquitin-activating enzyme]-L-cysteine + S-ubiquitinyl-[E2 ubiquitin-conjugating enzyme]-L-cysteine.. The protein operates within protein modification; protein ubiquitination. Functionally, E2 ubiquitin-conjugating enzyme involved in peroxisome biosynthesis. Acts late in peroxisomal matrix protein import, after matrix protein translocation. Required for both monoubiquitination and polyubiquitination of coreceptor PEX20. polyubiquitination of PEX20 at conserved lysine 'Lys-19' near the N-terminus leads to its and proteasomal degradation, whereas a monoubiquitination at the conserved cysteine 'Cys-8' is essential for its recycling. This Komagataella phaffii (strain GS115 / ATCC 20864) (Yeast) protein is E2 ubiquitin-conjugating enzyme PEX4.